The following is a 354-amino-acid chain: Serum paraoxonase/arylesterase 2 (354 aa).

The cysteines at positions 42 and 352 are disulfide-linked. Ca(2+) contacts are provided by Glu53 and Asp54. The active-site Proton acceptor is the His114. Positions 116, 167, 168, and 223 each coordinate Ca(2+). Asn254 is a glycosylation site (N-linked (GlcNAc...) asparagine). Positions 268 and 269 each coordinate Ca(2+). N-linked (GlcNAc...) asparagine glycosylation is found at Asn269 and Asn323.

Belongs to the paraoxonase family. As to quaternary structure, homotrimer. Ca(2+) serves as cofactor. Post-translationally, glycosylated. In terms of processing, the signal sequence is not cleaved.

It localises to the membrane. It catalyses the reaction a phenyl acetate + H2O = a phenol + acetate + H(+). The enzyme catalyses an N-acyl-L-homoserine lactone + H2O = an N-acyl-L-homoserine + H(+). Its function is as follows. Capable of hydrolyzing lactones and a number of aromatic carboxylic acid esters. The protein is Serum paraoxonase/arylesterase 2 (PON2) of Bos taurus (Bovine).